The following is a 1664-amino-acid chain: Cortactin-binding protein 2 (1664 aa).

Disordered regions lie at residues 1 to 23, 268 to 440, 455 to 479, and 495 to 618; these read MATDGASCEPDLSRAPEDAAGAA, QLKR…ALHP, GNANDPDQNGNTTQSPPSRDVSPTS, and QALS…KPSI. Positions 119-276 form a coiled coil; sequence RKMQERMSTQ…EQLKRGSDSK (158 aa). Low complexity-rich tracts occupy residues 368–379 and 395–407; these read SSAPTIPAASAS and TSSTPPIPSGTTP. Position 499 is an asymmetric dimethylarginine (Arg-499). 6 ANK repeats span residues 710–740, 744–773, 777–806, 810–839, 843–872, and 913–943; these read GRPTLLQQAAAQGNVTLLSMLLNEEGLDTNY, DGHSALYSAATNGHADCVRLLLNAEAQVNA, NGFTPLCAAAAQGHFECLELLLASDADVNH, GGQTPLYLACKNGNTDCIKLLLEAGTDRSI, DGWTPVHAAVDTGNVDSLKLLMYYQAPARG, and EGWTAAHIAASKGFKNCLEILCRHGGLEPEK. Positions 871–900 are disordered; the sequence is RGNSSNEEEPESGAFARDGGEESSEGTSEP. The segment at 1447 to 1483 is disordered; that stretch reads SKKKGESGAWRKVSTSPRKKSGRFSSPIWNEPDLSPG. Ser-1525 is modified (phosphoserine). The segment at 1558 to 1664 is disordered; it reads RTFHSSGSNP…KHEQVEKPNT (107 aa). The segment covering 1587-1600 has biased composition (polar residues); it reads PLSSHQATECSTSK. Residues 1625 to 1639 show a composition bias toward low complexity; it reads SQNTKRSSSSSNTRQ. Over residues 1646–1664 the composition is skewed to basic and acidic residues; sequence SKEENWNLHKHEQVEKPNT.

As to quaternary structure, interacts with CTTN/cortactin SH3 domain. Interacts with STRN, STRN4/zinedin and MOB4/phocein; this interactions mediate the association with the STRIPAK core complex and may regulate dendritic spine distribution of the STRIPAK complex in hippocampal neurons. Activation of glutamate receptors weakens the interaction with STRN and STRN4.

It is found in the cytoplasm. The protein resides in the cell cortex. It localises to the cell projection. Its subcellular location is the dendritic spine. Its function is as follows. Regulates the dendritic spine distribution of CTTN/cortactin in hippocampal neurons, and thus controls dendritic spinogenesis and dendritic spine maintenance. Associates with the striatin-interacting phosphatase and kinase (STRIPAK) core complex to regulate dendritic spine distribution of the STRIPAK complex in hippocampal neurons. In Oryctolagus cuniculus (Rabbit), this protein is Cortactin-binding protein 2 (CTTNBP2).